Here is a 279-residue protein sequence, read N- to C-terminus: Energy-coupling factor transporter ATP-binding protein EcfA (279 aa).

The ABC transporter domain occupies 5–240 (IELEKINYKY…GPELIDLGLD (236 aa)). 40-47 (GHNGSGKS) serves as a coordination point for ATP.

This sequence belongs to the ABC transporter superfamily. Energy-coupling factor EcfA family. Forms a stable energy-coupling factor (ECF) transporter complex composed of 2 membrane-embedded substrate-binding proteins (S component), 2 ATP-binding proteins (A component) and 2 transmembrane proteins (T component).

It is found in the cell membrane. In terms of biological role, ATP-binding (A) component of a common energy-coupling factor (ECF) ABC-transporter complex. Unlike classic ABC transporters this ECF transporter provides the energy necessary to transport a number of different substrates. This chain is Energy-coupling factor transporter ATP-binding protein EcfA, found in Enterococcus faecium (Streptococcus faecium).